Here is a 157-residue protein sequence, read N- to C-terminus: SsrA-binding protein (157 aa).

The disordered stretch occupies residues 131–157 (KQLHDKRDTEKKRDWSREKGRIMRARG). Positions 132 to 151 (QLHDKRDTEKKRDWSREKGR) are enriched in basic and acidic residues.

This sequence belongs to the SmpB family.

Its subcellular location is the cytoplasm. Functionally, required for rescue of stalled ribosomes mediated by trans-translation. Binds to transfer-messenger RNA (tmRNA), required for stable association of tmRNA with ribosomes. tmRNA and SmpB together mimic tRNA shape, replacing the anticodon stem-loop with SmpB. tmRNA is encoded by the ssrA gene; the 2 termini fold to resemble tRNA(Ala) and it encodes a 'tag peptide', a short internal open reading frame. During trans-translation Ala-aminoacylated tmRNA acts like a tRNA, entering the A-site of stalled ribosomes, displacing the stalled mRNA. The ribosome then switches to translate the ORF on the tmRNA; the nascent peptide is terminated with the 'tag peptide' encoded by the tmRNA and targeted for degradation. The ribosome is freed to recommence translation, which seems to be the essential function of trans-translation. In Rhodopseudomonas palustris (strain BisB18), this protein is SsrA-binding protein.